Consider the following 209-residue polypeptide: Glycolipid transfer protein B (209 aa).

Repeat copies occupy residues 45 to 55 (IKADITGNITK) and 56 to 66 (IRSVYESNPTQ). A 2 X 12 AA approximate tandem repeats region spans residues 45-66 (IKADITGNITKIRSVYESNPTQ). 48–55 (DITGNITK) contributes to the beta-D-galactosyl-(1-&gt;4)-beta-D-glucosyl-(1&lt;-&gt;1)-N-[(9Z)-octadecenoyl]-sphing-4-enine binding site. Beta-D-galactosyl-(1-&gt;4)-beta-D-glucosyl-(1&lt;-&gt;1)-N-[(9Z)-octadecenoyl]-sphing-4-enine is bound by residues His-140 and Tyr-207.

Belongs to the GLTP family.

It localises to the cytoplasm. In terms of biological role, accelerates the intermembrane transfer of various glycolipids. Catalyzes the transfer of various glycosphingolipids between membranes but does not catalyze the transfer of phospholipids. May be involved in the intracellular translocation of glucosylceramides. This is Glycolipid transfer protein B (gltp-b) from Xenopus laevis (African clawed frog).